The primary structure comprises 119 residues: Ribonuclease P protein component (119 aa).

The protein belongs to the RnpA family. In terms of assembly, consists of a catalytic RNA component (M1 or rnpB) and a protein subunit.

It catalyses the reaction Endonucleolytic cleavage of RNA, removing 5'-extranucleotides from tRNA precursor.. Functionally, RNaseP catalyzes the removal of the 5'-leader sequence from pre-tRNA to produce the mature 5'-terminus. It can also cleave other RNA substrates such as 4.5S RNA. The protein component plays an auxiliary but essential role in vivo by binding to the 5'-leader sequence and broadening the substrate specificity of the ribozyme. The chain is Ribonuclease P protein component from Photorhabdus laumondii subsp. laumondii (strain DSM 15139 / CIP 105565 / TT01) (Photorhabdus luminescens subsp. laumondii).